The sequence spans 153 residues: FAD synthase (153 aa).

Residues 9–10 (TF), 14–17 (HPGH), Asp97, and Tyr124 each bind ATP.

This sequence belongs to the archaeal FAD synthase family. Homodimer. It depends on a divalent metal cation as a cofactor.

The catalysed reaction is FMN + ATP + H(+) = FAD + diphosphate. The protein operates within cofactor biosynthesis; FAD biosynthesis; FAD from FMN: step 1/1. Its function is as follows. Catalyzes the transfer of the AMP portion of ATP to flavin mononucleotide (FMN) to produce flavin adenine dinucleotide (FAD) coenzyme. This Methanobrevibacter smithii (strain ATCC 35061 / DSM 861 / OCM 144 / PS) protein is FAD synthase.